We begin with the raw amino-acid sequence, 377 residues long: Odorant receptor 30a (377 aa).

Over 1–34 (MELKSMDPVEMPIFGSTLKLMKFWSYLFVHNWRR) the chain is Cytoplasmic. A helical transmembrane segment spans residues 35-55 (YVAMTPYIIINCTQYVDIYLS). Over 56–65 (TESLDFIIRN) the chain is Extracellular. The helical transmembrane segment at 66–86 (VYLAVLFTNTVVRGVLLCVQR) threads the bilayer. Residues 87-127 (FSYERFINILKSFYIELLQSDDPIINILVKETTRLSVLISR) are Cytoplasmic-facing. A helical transmembrane segment spans residues 128–148 (INLLMGCCTCIGFVTYPIFGS). Over 149 to 172 (ERVLPYGMYLPTIDEYKYASPYYE) the chain is Extracellular. A helical membrane pass occupies residues 173 to 193 (IFFVIQAIMAPMGCCMYIPYT). The Cytoplasmic segment spans residues 194–254 (NMVVTFTLFA…SMNALNTHLH (61 aa)). A helical membrane pass occupies residues 255-275 (LVEFLCFGAMLCVLLFSLIIA). Residues 276-280 (QTIAQ) are Extracellular-facing. A helical membrane pass occupies residues 281 to 301 (TVIVIAYMVMIFANSVVLYYV). The Cytoplasmic segment spans residues 302–344 (ANELYFQSFDIAIAAYESNWMDFDVDTQKTLKFLIMRSQKPLA). A helical transmembrane segment spans residues 345–365 (ILVGGTYPMNLKMLQSLLNAI). At 366 to 377 (YSFFTLLRRVYG) the chain is on the extracellular side.

The protein belongs to the insect chemoreceptor superfamily. Heteromeric odorant receptor channel (TC 1.A.69) family. Or30a subfamily. In terms of assembly, interacts with Orco. Complexes exist early in the endomembrane system in olfactory sensory neurons (OSNs), coupling these complexes to the conserved ciliary trafficking pathway.

It localises to the cell membrane. Odorant receptor which mediates acceptance or avoidance behavior, depending on its substrates. The odorant receptor repertoire encodes a large collection of odor stimuli that vary widely in identity, intensity, and duration. May form a complex with Orco to form odorant-sensing units, providing sensitive and prolonged odorant signaling and calcium permeability. Involved in the behavioral responses to propyl acetate and anisole. This Drosophila melanogaster (Fruit fly) protein is Odorant receptor 30a (Or30a).